The following is a 177-amino-acid chain: ATP synthase subunit delta (177 aa).

This sequence belongs to the ATPase delta chain family. F-type ATPases have 2 components, F(1) - the catalytic core - and F(0) - the membrane proton channel. F(1) has five subunits: alpha(3), beta(3), gamma(1), delta(1), epsilon(1). F(0) has three main subunits: a(1), b(2) and c(10-14). The alpha and beta chains form an alternating ring which encloses part of the gamma chain. F(1) is attached to F(0) by a central stalk formed by the gamma and epsilon chains, while a peripheral stalk is formed by the delta and b chains.

The protein localises to the cell inner membrane. Its function is as follows. F(1)F(0) ATP synthase produces ATP from ADP in the presence of a proton or sodium gradient. F-type ATPases consist of two structural domains, F(1) containing the extramembraneous catalytic core and F(0) containing the membrane proton channel, linked together by a central stalk and a peripheral stalk. During catalysis, ATP synthesis in the catalytic domain of F(1) is coupled via a rotary mechanism of the central stalk subunits to proton translocation. This protein is part of the stalk that links CF(0) to CF(1). It either transmits conformational changes from CF(0) to CF(1) or is implicated in proton conduction. The protein is ATP synthase subunit delta of Edwardsiella ictaluri (strain 93-146).